Reading from the N-terminus, the 62-residue chain is MSEVIIHEDENFERALKRFKKKCEKAGILSDLRKHRHYEKPSERRKRKMNAAVRKNRRTRHG.

The segment at 38–62 (YEKPSERRKRKMNAAVRKNRRTRHG) is disordered.

It belongs to the bacterial ribosomal protein bS21 family.

This is Small ribosomal subunit protein bS21 from Gemmatimonas aurantiaca (strain DSM 14586 / JCM 11422 / NBRC 100505 / T-27).